We begin with the raw amino-acid sequence, 429 residues long: Chaperone SurA (429 aa).

Residues M1 to A18 form the signal peptide. 2 consecutive PpiC domains span residues N170 to A271 and I281 to A380.

The protein localises to the periplasm. It carries out the reaction [protein]-peptidylproline (omega=180) = [protein]-peptidylproline (omega=0). Its function is as follows. Chaperone involved in the correct folding and assembly of outer membrane proteins. Recognizes specific patterns of aromatic residues and the orientation of their side chains, which are found more frequently in integral outer membrane proteins. May act in both early periplasmic and late outer membrane-associated steps of protein maturation. In Legionella pneumophila (strain Paris), this protein is Chaperone SurA.